Here is a 303-residue protein sequence, read N- to C-terminus: Diaminopimelate epimerase (303 aa).

Substrate is bound by residues Asn15, Gln47, and Asn67. Cys76 functions as the Proton donor in the catalytic mechanism. Substrate-binding positions include 77–78 (GN), Asn163, Asn197, and 215–216 (ER). The Proton acceptor role is filled by Cys224. Position 225 to 226 (225 to 226 (GS)) interacts with substrate. The tract at residues 279 to 303 (DPATGEWSRDTQGLQGSGNADRGTA) is disordered.

The protein belongs to the diaminopimelate epimerase family. Homodimer.

Its subcellular location is the cytoplasm. The catalysed reaction is (2S,6S)-2,6-diaminopimelate = meso-2,6-diaminopimelate. It functions in the pathway amino-acid biosynthesis; L-lysine biosynthesis via DAP pathway; DL-2,6-diaminopimelate from LL-2,6-diaminopimelate: step 1/1. Catalyzes the stereoinversion of LL-2,6-diaminopimelate (L,L-DAP) to meso-diaminopimelate (meso-DAP), a precursor of L-lysine and an essential component of the bacterial peptidoglycan. The sequence is that of Diaminopimelate epimerase from Brucella canis (strain ATCC 23365 / NCTC 10854 / RM-666).